Reading from the N-terminus, the 236-residue chain is Cytochrome b-c1 complex subunit Rieske-4, mitochondrial (236 aa).

The transit peptide at 1–24 (MINFGSCWGLASVTSNSFSIISGF) directs the protein to the mitochondrion. Topologically, residues 25–73 (SSNSVSHAHDMGLVPDLPPTVAAIKNPTSKIVYDEHNHERYPPGDPSKR) are mitochondrial matrix. The chain crosses the membrane as a helical span at residues 74–96 (AFAYFVLTGGRFVYASLVRLLIL). Residues 97-236 (KFVLSMSASK…FLEENKLLIG (140 aa)) lie on the Mitochondrial intermembrane side of the membrane. Residues 146–234 (INLANSVDLG…YSFLEENKLL (89 aa)) form the Rieske domain. 4 residues coordinate [2Fe-2S] cluster: Cys179, His181, Cys198, and His201. Cys184 and Cys200 are disulfide-bonded.

Belongs to the Rieske iron-sulfur protein family. In terms of assembly, component of the ubiquinol-cytochrome c oxidoreductase (cytochrome b-c1 complex, complex III, CIII), a multisubunit enzyme composed of 3 respiratory subunits cytochrome b, cytochrome c1 and Rieske protein, 2 core protein subunits, and several low-molecular weight protein subunits. The complex exists as an obligatory dimer and forms supercomplexes (SCs) in the inner mitochondrial membrane with cytochrome c oxidase (complex IV, CIV). The cofactor is [2Fe-2S] cluster.

Its subcellular location is the mitochondrion inner membrane. The enzyme catalyses a quinol + 2 Fe(III)-[cytochrome c](out) = a quinone + 2 Fe(II)-[cytochrome c](out) + 2 H(+)(out). Its function is as follows. Component of the ubiquinol-cytochrome c oxidoreductase, a multisubunit transmembrane complex that is part of the mitochondrial electron transport chain which drives oxidative phosphorylation. The respiratory chain contains 3 multisubunit complexes succinate dehydrogenase (complex II, CII), ubiquinol-cytochrome c oxidoreductase (cytochrome b-c1 complex, complex III, CIII) and cytochrome c oxidase (complex IV, CIV), that cooperate to transfer electrons derived from NADH and succinate to molecular oxygen, creating an electrochemical gradient over the inner membrane that drives transmembrane transport and the ATP synthase. The cytochrome b-c1 complex catalyzes electron transfer from ubiquinol to cytochrome c, linking this redox reaction to translocation of protons across the mitochondrial inner membrane, with protons being carried across the membrane as hydrogens on the quinol. In the process called Q cycle, 2 protons are consumed from the matrix, 4 protons are released into the intermembrane space and 2 electrons are passed to cytochrome c. The Rieske protein is a catalytic core subunit containing a [2Fe-2S] iron-sulfur cluster. It cycles between 2 conformational states during catalysis to transfer electrons from the quinol bound in the Q(0) site in cytochrome b to cytochrome c1. This chain is Cytochrome b-c1 complex subunit Rieske-4, mitochondrial, found in Nicotiana tabacum (Common tobacco).